Consider the following 361-residue polypeptide: Phospho-N-acetylmuramoyl-pentapeptide-transferase (361 aa).

10 consecutive transmembrane segments (helical) span residues 18–38 (VFNY…ILVL), 73–93 (TMGG…WGDL), 97–117 (FIWV…MDDY), 135–155 (LLQS…ATTG), 168–188 (VLPN…VGSS), 196–216 (GLDG…GVFA), 235–255 (GAGE…GFLW), 263–283 (VFMG…TAVV), 288–308 (LVYF…ILQV), and 338–358 (KVIV…LATL).

It belongs to the glycosyltransferase 4 family. MraY subfamily. The cofactor is Mg(2+).

Its subcellular location is the cell inner membrane. It carries out the reaction UDP-N-acetyl-alpha-D-muramoyl-L-alanyl-gamma-D-glutamyl-meso-2,6-diaminopimeloyl-D-alanyl-D-alanine + di-trans,octa-cis-undecaprenyl phosphate = di-trans,octa-cis-undecaprenyl diphospho-N-acetyl-alpha-D-muramoyl-L-alanyl-D-glutamyl-meso-2,6-diaminopimeloyl-D-alanyl-D-alanine + UMP. The protein operates within cell wall biogenesis; peptidoglycan biosynthesis. Its function is as follows. Catalyzes the initial step of the lipid cycle reactions in the biosynthesis of the cell wall peptidoglycan: transfers peptidoglycan precursor phospho-MurNAc-pentapeptide from UDP-MurNAc-pentapeptide onto the lipid carrier undecaprenyl phosphate, yielding undecaprenyl-pyrophosphoryl-MurNAc-pentapeptide, known as lipid I. The sequence is that of Phospho-N-acetylmuramoyl-pentapeptide-transferase from Coxiella burnetii (strain CbuK_Q154) (Coxiella burnetii (strain Q154)).